The primary structure comprises 342 residues: Pre-mRNA-splicing factor 18 (342 aa).

Belongs to the PRP18 family. Interacts with the spliceosome. Part of a complex containing U4/U6 snRNPs.

The protein resides in the nucleus speckle. In terms of biological role, participates in the second step of pre-mRNA splicing. This Danio rerio (Zebrafish) protein is Pre-mRNA-splicing factor 18 (prpf18).